We begin with the raw amino-acid sequence, 533 residues long: Amidophosphoribosyltransferase (533 aa).

The Nucleophile role is filled by Cys2. A Glutamine amidotransferase type-2 domain is found at 2 to 238 (CGILALMLAD…PGECVFIRRS (237 aa)). Mg(2+) contacts are provided by Asp383 and Asp384. Residue Ser506 is modified to Phosphoserine.

This sequence in the C-terminal section; belongs to the purine/pyrimidine phosphoribosyltransferase family. Requires Mg(2+) as cofactor.

It catalyses the reaction 5-phospho-beta-D-ribosylamine + L-glutamate + diphosphate = 5-phospho-alpha-D-ribose 1-diphosphate + L-glutamine + H2O. It participates in purine metabolism; IMP biosynthesis via de novo pathway; N(1)-(5-phospho-D-ribosyl)glycinamide from 5-phospho-alpha-D-ribose 1-diphosphate: step 1/2. This Schizosaccharomyces pombe (strain 972 / ATCC 24843) (Fission yeast) protein is Amidophosphoribosyltransferase (ade4).